The sequence spans 276 residues: ADP-dependent (S)-NAD(P)H-hydrate dehydratase (276 aa).

A YjeF C-terminal domain is found at 5–269; it reads TPKAMCAWIP…EELPTYLKIF (265 aa). 3 residues coordinate (6S)-NADPHX: alanine 40, glycine 103, and histidine 152. An AMP-binding site is contributed by glycine 211. Aspartate 212 provides a ligand contact to (6S)-NADPHX.

It belongs to the NnrD/CARKD family. As to quaternary structure, homotetramer. It depends on Mg(2+) as a cofactor.

It catalyses the reaction (6S)-NADHX + ADP = AMP + phosphate + NADH + H(+). The catalysed reaction is (6S)-NADPHX + ADP = AMP + phosphate + NADPH + H(+). In terms of biological role, catalyzes the dehydration of the S-form of NAD(P)HX at the expense of ADP, which is converted to AMP. Together with NAD(P)HX epimerase, which catalyzes the epimerization of the S- and R-forms, the enzyme allows the repair of both epimers of NAD(P)HX, a damaged form of NAD(P)H that is a result of enzymatic or heat-dependent hydration. The sequence is that of ADP-dependent (S)-NAD(P)H-hydrate dehydratase from Listeria monocytogenes serovar 1/2a (strain ATCC BAA-679 / EGD-e).